Reading from the N-terminus, the 335-residue chain is uncharacterized protein (335 aa).

Disordered regions lie at residues 153–174 (LNDK…SDRI), 218–239 (HTSV…QEEV), and 254–295 (RCKV…PVTS). Residues 156 to 170 (KEDEEKLDQTTESEE) are compositionally biased toward acidic residues. 2 stretches are compositionally biased toward low complexity: residues 222–234 (RRSM…SASS) and 275–295 (THTS…PVTS).

This is an uncharacterized protein from Caenorhabditis elegans.